Reading from the N-terminus, the 345-residue chain is MTQTLVNNAYGKEISMTVIGAGSYGTSLAISLSRNGANVVLWGHEPEHMAKLEADRANHEFLPGIEFPPSLIVESDLAKAVQASRDLLVVVPSHVFGIVLNSLKPYLRDDSRICWATKGLEPETGRLLKDVAFDVLGEHYSLAVLSGPTFAKELAAGMPTAISVASPDAQFVADLQEKIHCSKTFRVYANSDFTGMQLGGAVKNVIAIGAGMSDGIGFGANARTALITRGLAEMCRLGAALGAQPETFMGMAGLGDLVLTCTDNQSRNRRFGLALGQGKDVDTAQADIGQVVEGYRNTKEVWMLAQRMGVEMPIVDQIYQVLYQGKDARLAAQDLLARDKKSEGK.

Positions 23, 24, 44, and 118 each coordinate NADPH. Residues K118, G147, and T149 each coordinate sn-glycerol 3-phosphate. A151 contacts NADPH. Sn-glycerol 3-phosphate contacts are provided by K203, D256, S266, R267, and N268. K203 serves as the catalytic Proton acceptor. Position 267 (R267) interacts with NADPH. V291 and E293 together coordinate NADPH.

Belongs to the NAD-dependent glycerol-3-phosphate dehydrogenase family.

Its subcellular location is the cytoplasm. It carries out the reaction sn-glycerol 3-phosphate + NAD(+) = dihydroxyacetone phosphate + NADH + H(+). It catalyses the reaction sn-glycerol 3-phosphate + NADP(+) = dihydroxyacetone phosphate + NADPH + H(+). The protein operates within membrane lipid metabolism; glycerophospholipid metabolism. Catalyzes the reduction of the glycolytic intermediate dihydroxyacetone phosphate (DHAP) to sn-glycerol 3-phosphate (G3P), the key precursor for phospholipid synthesis. In Vibrio vulnificus (strain CMCP6), this protein is Glycerol-3-phosphate dehydrogenase [NAD(P)+].